A 460-amino-acid polypeptide reads, in one-letter code: Ribosome biogenesis protein YTM1 (460 aa).

The segment at 8-89 (VKIRFFTREK…EASLNVEYTR (82 aa)) is ubiquitin-like (UBL) domain. The interval 99 to 460 (SFSNEDWVSS…INKGDNIFKN (362 aa)) is sufficient for interaction with ERB1 and association with 66S pre-ribosomes. WD repeat units follow at residues 101–140 (SNEDWVSSLDVGDGSKHIISGSYDGIVRTWDLSGNVQKQY), 142–180 (GHSGPIRAVKYISNTRLVSAGNDRTLRLWKTKNDDLKLT), 206–244 (GHKAPVVSIDVSDNSRILSASYDNSIGFWSTIYKEMTVV), 285–325 (SHTA…CIDT), 327–366 (TTSYSLLSIAQLSTLNLLACGSSARHITLHDPRVGASSKV), 373–413 (GHKN…PMYT), and 424–460 (GVNDKVFAVKWAEKVGIISAGQDKKIQINKGDNIFKN).

The protein belongs to the WD repeat WDR12/YTM1 family. In terms of assembly, component of the NOP7 complex, composed of ERB1, NOP7 and YTM1. The complex is held together by ERB1, which interacts with NOP7 via its N-terminal domain and with YTM1 via a high-affinity interaction between the seven-bladed beta-propeller domains of the 2 proteins. The NOP7 complex associates with the 66S pre-ribosome. Interacts (via UBL domain) with MDN1 (via VWFA/MIDAS domain).

The protein localises to the nucleus. The protein resides in the nucleolus. It is found in the nucleoplasm. Component of the NOP7 complex, which is required for maturation of the 25S and 5.8S ribosomal RNAs and formation of the 60S ribosome. The protein is Ribosome biogenesis protein YTM1 of Saccharomyces cerevisiae (strain YJM789) (Baker's yeast).